A 117-amino-acid chain; its full sequence is Large ribosomal subunit protein bL20 (117 aa).

The protein belongs to the bacterial ribosomal protein bL20 family.

Functionally, binds directly to 23S ribosomal RNA and is necessary for the in vitro assembly process of the 50S ribosomal subunit. It is not involved in the protein synthesizing functions of that subunit. This Mesomycoplasma hyopneumoniae (strain 7448) (Mycoplasma hyopneumoniae) protein is Large ribosomal subunit protein bL20.